The chain runs to 836 residues: Mediator of RNA polymerase II transcription subunit 25 (836 aa).

4 disordered regions span residues 260 to 285 (IPVT…PVSV), 435 to 466 (GSGA…VASN), 518 to 547 (VGQQ…PSSG), and 731 to 836 (QHQL…GFMG). Composition is skewed to polar residues over residues 271 to 282 (SSANGPIQNRQP) and 442 to 466 (SAQT…VASN). Positions 680–761 (NQQQQQQQQL…QQHQLTQLQH (82 aa)) form a coiled coil. Composition is skewed to low complexity over residues 731-818 (QHQL…PGRS) and 827-836 (PNMPGAGFMG).

The protein belongs to the Mediator complex subunit 25 family. Component of the Mediator complex. Interacts with the transcription factors BBX20, RAP2-2, ERF1B, ERF091, ERF095, ERF098, ERF109, HB29, PHL1, DREB2A, ABI5 and MYC2. Interacts with the E3 ubiquitin-protein ligases MBR1 and MBR2.

The protein localises to the nucleus. Its function is as follows. Component of the Mediator complex, a coactivator involved in the regulated transcription of nearly all RNA polymerase II-dependent genes. Mediator functions as a bridge to convey information from gene-specific regulatory proteins to the basal RNA polymerase II transcription machinery. Mediator is recruited to promoters by direct interactions with regulatory proteins and serves as a scaffold for the assembly of a functional preinitiation complex with RNA polymerase II and the general transcription factors. Positive regulator of shade avoidance and of jasmonate signaling. Acts in repression of PhyB-mediated light signaling and regulates the expression of FLOWERING LOCUS T (FT) and of CONSTANS (CO). The sequence is that of Mediator of RNA polymerase II transcription subunit 25 (MED25) from Arabidopsis thaliana (Mouse-ear cress).